We begin with the raw amino-acid sequence, 38 residues long: Large ribosomal subunit protein bL36 (38 aa).

This sequence belongs to the bacterial ribosomal protein bL36 family.

The protein is Large ribosomal subunit protein bL36 of Cellvibrio japonicus (strain Ueda107) (Pseudomonas fluorescens subsp. cellulosa).